An 86-amino-acid polypeptide reads, in one-letter code: Small ribosomal subunit protein bS20 (86 aa).

The span at 1-22 (MANIKSAKKRAVQSEKRRKHNA) shows a compositional bias: basic residues. The tract at residues 1–28 (MANIKSAKKRAVQSEKRRKHNASGRSMM) is disordered.

It belongs to the bacterial ribosomal protein bS20 family.

Binds directly to 16S ribosomal RNA. This chain is Small ribosomal subunit protein bS20, found in Serratia proteamaculans (strain 568).